Here is a 522-residue protein sequence, read N- to C-terminus: ATP synthase subunit alpha, mitochondrial (522 aa).

172–179 (GDRQTGKT) provides a ligand contact to ATP.

Belongs to the ATPase alpha/beta chains family. As to quaternary structure, F-type ATPases have 2 components, CF(1) - the catalytic core - and CF(0) - the membrane proton channel. CF(1) has five subunits: alpha(3), beta(3), gamma(1), delta(1), epsilon(1). CF(0) has three main subunits: a, b and c.

It is found in the mitochondrion. The protein resides in the mitochondrion inner membrane. Its function is as follows. Mitochondrial membrane ATP synthase (F(1)F(0) ATP synthase or Complex V) produces ATP from ADP in the presence of a proton gradient across the membrane which is generated by electron transport complexes of the respiratory chain. F-type ATPases consist of two structural domains, F(1) - containing the extramembraneous catalytic core, and F(0) - containing the membrane proton channel, linked together by a central stalk and a peripheral stalk. During catalysis, ATP synthesis in the catalytic domain of F(1) is coupled via a rotary mechanism of the central stalk subunits to proton translocation. Subunits alpha and beta form the catalytic core in F(1). Rotation of the central stalk against the surrounding alpha(3)beta(3) subunits leads to hydrolysis of ATP in three separate catalytic sites on the beta subunits. Subunit alpha does not bear the catalytic high-affinity ATP-binding sites. The sequence is that of ATP synthase subunit alpha, mitochondrial (ATP1) from Acanthamoeba castellanii (Amoeba).